The chain runs to 252 residues: tRNA1(Val) (adenine(37)-N6)-methyltransferase (252 aa).

Belongs to the methyltransferase superfamily. tRNA (adenine-N(6)-)-methyltransferase family.

The protein localises to the cytoplasm. The catalysed reaction is adenosine(37) in tRNA1(Val) + S-adenosyl-L-methionine = N(6)-methyladenosine(37) in tRNA1(Val) + S-adenosyl-L-homocysteine + H(+). In terms of biological role, specifically methylates the adenine in position 37 of tRNA(1)(Val) (anticodon cmo5UAC). This Yersinia pseudotuberculosis serotype IB (strain PB1/+) protein is tRNA1(Val) (adenine(37)-N6)-methyltransferase.